The sequence spans 212 residues: Phosphatidylserine decarboxylase proenzyme (212 aa).

Serine 182 acts as the Schiff-base intermediate with substrate; via pyruvic acid in catalysis. Residue serine 182 is modified to Pyruvic acid (Ser); by autocatalysis.

Belongs to the phosphatidylserine decarboxylase family. PSD-A subfamily. In terms of assembly, heterodimer of a large membrane-associated beta subunit and a small pyruvoyl-containing alpha subunit. Pyruvate serves as cofactor. Is synthesized initially as an inactive proenzyme. Formation of the active enzyme involves a self-maturation process in which the active site pyruvoyl group is generated from an internal serine residue via an autocatalytic post-translational modification. Two non-identical subunits are generated from the proenzyme in this reaction, and the pyruvate is formed at the N-terminus of the alpha chain, which is derived from the carboxyl end of the proenzyme. The post-translation cleavage follows an unusual pathway, termed non-hydrolytic serinolysis, in which the side chain hydroxyl group of the serine supplies its oxygen atom to form the C-terminus of the beta chain, while the remainder of the serine residue undergoes an oxidative deamination to produce ammonia and the pyruvoyl prosthetic group on the alpha chain.

The protein localises to the cell membrane. It carries out the reaction a 1,2-diacyl-sn-glycero-3-phospho-L-serine + H(+) = a 1,2-diacyl-sn-glycero-3-phosphoethanolamine + CO2. It functions in the pathway phospholipid metabolism; phosphatidylethanolamine biosynthesis; phosphatidylethanolamine from CDP-diacylglycerol: step 2/2. Its function is as follows. Catalyzes the formation of phosphatidylethanolamine (PtdEtn) from phosphatidylserine (PtdSer). The polypeptide is Phosphatidylserine decarboxylase proenzyme (Paraburkholderia phytofirmans (strain DSM 17436 / LMG 22146 / PsJN) (Burkholderia phytofirmans)).